Consider the following 190-residue polypeptide: Large ribosomal subunit protein bL17 (190 aa).

Residues 135 to 165 (AKAAPAAEEAPAEEAPAAEEAATEEAPAAEE) show a composition bias toward low complexity. The segment at 135–190 (AKAAPAAEEAPAEEAPAAEEAATEEAPAAEETATEEAAAEEAPAAEEAPAEEKDAK) is disordered.

It belongs to the bacterial ribosomal protein bL17 family. Part of the 50S ribosomal subunit. Contacts protein L32.

The sequence is that of Large ribosomal subunit protein bL17 from Pseudarthrobacter chlorophenolicus (strain ATCC 700700 / DSM 12829 / CIP 107037 / JCM 12360 / KCTC 9906 / NCIMB 13794 / A6) (Arthrobacter chlorophenolicus).